Consider the following 62-residue polypeptide: Potassium channel toxin gamma-KTx 1.1 (62 aa).

Positions 1–20 (MKVLILIMIIASLMIMGVEM) are cleaved as a signal peptide. 4 cysteine pairs are disulfide-bonded: cysteine 25–cysteine 43, cysteine 31–cysteine 54, cysteine 40–cysteine 59, and cysteine 44–cysteine 61.

It belongs to the ergtoxin family. Gamma-KTx 1 subfamily. In terms of processing, after protein storage at -20 Celsius degrees during a couple of months, the Met-55 of a small number of toxins is naturally oxidized. This oxidized form is about three orders of magnitude less efficient (IC(50)=15 uM) than non-oxidized form. Expressed by the venom gland.

The protein resides in the secreted. Blocks human and rat Kv11.1/KCNH2/ERG1 and Kv11.3/KCNH7/ERG3, as well as rat (but not human) Kv11.2/KCNH6/ERG2 by binding to channel outer vestibule (S5P domain) with a 1:1 stoichiometry. Inhibition data are the following: hERG1 (reversible, IC(50)~7 nM), rERG1 (reversible, Kd=6.8 nM), rERG2 (irreversible, Kd=2.8 nM), hERG3 (irreversible, Kd=4.05 nM) and rERG3 (reversible, Kd=38.1 nM) potassium channels. The toxin potency is not affected by elevating potassium ion concentration from 2 to 98 mM. This toxin only blocks channels in a closed state. At high toxin concentrations, block of Kv11.1/KCNH2/ERG1 macroscopic current is incomplete (93.5%). This suggests a kinetic mechanism model with two different states of toxin-channel binding (T+C=TC*=TC; in the TC* state, the toxin binds the channel but does not occlude the pore, whereas in the TC state the toxin binds and occludes the pore). In this model, incomplete block is explained by the relatively fast dissociation rate from the blocked channel conformation (TC) relative to the rate of conversion of the toxin-channel encounter complex (TC*) to the blocked channel conformation (TC). The polypeptide is Potassium channel toxin gamma-KTx 1.1 (Centruroides noxius (Mexican scorpion)).